Reading from the N-terminus, the 437-residue chain is Na(+)/H(+) antiporter NhaA (437 aa).

Transmembrane regions (helical) follow at residues 12-32, 65-85, 103-123, 133-153, 162-182, 186-206, 214-234, 308-328, 333-353, 377-397, and 412-432; these read SMNI…AVIA, LTMI…MVGL, ALPF…YSMV, GLAI…SLLG, IFLT…IAIF, HVAY…YFIG, IFFL…GIHS, GAVN…VMFS, VIGG…FLGI, ISGV…IANL, and LGVL…LHWV.

Belongs to the NhaA Na(+)/H(+) (TC 2.A.33) antiporter family.

It localises to the cell inner membrane. The enzyme catalyses Na(+)(in) + 2 H(+)(out) = Na(+)(out) + 2 H(+)(in). Its function is as follows. Na(+)/H(+) antiporter that extrudes sodium in exchange for external protons. This is Na(+)/H(+) antiporter NhaA from Bacteroides fragilis (strain ATCC 25285 / DSM 2151 / CCUG 4856 / JCM 11019 / LMG 10263 / NCTC 9343 / Onslow / VPI 2553 / EN-2).